A 1337-amino-acid polypeptide reads, in one-letter code: DNA-directed RNA polymerase subunit beta' (1337 aa).

Zn(2+) contacts are provided by C60, C62, C75, and C78. Residues D536, D538, and D540 each coordinate Mg(2+). Zn(2+) is bound by residues C895, C974, C981, and C984.

It belongs to the RNA polymerase beta' chain family. The RNAP catalytic core consists of 2 alpha, 1 beta, 1 beta' and 1 omega subunit. When a sigma factor is associated with the core the holoenzyme is formed, which can initiate transcription. It depends on Mg(2+) as a cofactor. Zn(2+) is required as a cofactor.

It catalyses the reaction RNA(n) + a ribonucleoside 5'-triphosphate = RNA(n+1) + diphosphate. DNA-dependent RNA polymerase catalyzes the transcription of DNA into RNA using the four ribonucleoside triphosphates as substrates. The sequence is that of DNA-directed RNA polymerase subunit beta' from Bifidobacterium adolescentis (strain ATCC 15703 / DSM 20083 / NCTC 11814 / E194a).